We begin with the raw amino-acid sequence, 472 residues long: Cysteine--tRNA ligase (472 aa).

Cysteine 28 contacts Zn(2+). Positions 30–40 (PTVYDYTHIGH) match the 'HIGH' region motif. The Zn(2+) site is built by cysteine 207, histidine 232, and glutamate 236. The 'KMSKS' region motif lies at 264-268 (KMSKS). Lysine 267 is an ATP binding site.

It belongs to the class-I aminoacyl-tRNA synthetase family. Zn(2+) is required as a cofactor.

The protein resides in the cytoplasm. The catalysed reaction is tRNA(Cys) + L-cysteine + ATP = L-cysteinyl-tRNA(Cys) + AMP + diphosphate. This is Cysteine--tRNA ligase (cysS) from Aeropyrum pernix (strain ATCC 700893 / DSM 11879 / JCM 9820 / NBRC 100138 / K1).